The sequence spans 216 residues: Large ribosomal subunit protein bL25 (216 aa).

2 disordered regions span residues 1 to 21 and 192 to 216; these read MAET…GAVR and SADN…GKED. Residues 195–216 show a composition bias toward basic and acidic residues; the sequence is NEAKTEEAGEDKSEEKSSGKED.

Belongs to the bacterial ribosomal protein bL25 family. CTC subfamily. Part of the 50S ribosomal subunit; part of the 5S rRNA/L5/L18/L25 subcomplex. Contacts the 5S rRNA. Binds to the 5S rRNA independently of L5 and L18.

This is one of the proteins that binds to the 5S RNA in the ribosome where it forms part of the central protuberance. This Parvibaculum lavamentivorans (strain DS-1 / DSM 13023 / NCIMB 13966) protein is Large ribosomal subunit protein bL25.